The following is a 146-amino-acid chain: Ribonuclease P protein component (146 aa).

This sequence belongs to the RnpA family. As to quaternary structure, consists of a catalytic RNA component (M1 or rnpB) and a protein subunit.

The enzyme catalyses Endonucleolytic cleavage of RNA, removing 5'-extranucleotides from tRNA precursor.. Its function is as follows. RNaseP catalyzes the removal of the 5'-leader sequence from pre-tRNA to produce the mature 5'-terminus. It can also cleave other RNA substrates such as 4.5S RNA. The protein component plays an auxiliary but essential role in vivo by binding to the 5'-leader sequence and broadening the substrate specificity of the ribozyme. The protein is Ribonuclease P protein component of Helicobacter hepaticus (strain ATCC 51449 / 3B1).